The chain runs to 802 residues: Aldehyde dehydrogenase family 16 member A1 (802 aa).

It belongs to the aldehyde dehydrogenase family. As to quaternary structure, interacts with SPG21.

The polypeptide is Aldehyde dehydrogenase family 16 member A1 (Aldh16a1) (Mus musculus (Mouse)).